The sequence spans 541 residues: MQFKYGALIFSGFLGLSIVLASCGARGKFDQVDDGKIKLASSLTSRSASAALQKVVEKYNKVKGVNDYPIEITQIAGGYDGGRTDLQTRVSVKDKTSFYNMILNYPDLVSVLARNGMELPFDGVNVDKLSPNFLKFNERISGVAKKANYAIPISMSTDILILNAPVLHYILNSAKKNDGNTKVQVKAQSKDSQTKVKGTMEIGTDESTKNLWSDIQKKAGENGKATTEGTKKAAAKSTHLTLLTKSEQSTQGNNGASESDKKIEETWGTYSEVDGGLKNYTFKADVFDTWHGLIDFSTRVAKSFKNKVSDISTKKGTDIQGVLGLDSTPNALFTSVFAAGDSNFDNFFYKVKDGRADFSNFNENGTSYKNLEKVFNDYKKLTDSNGLFVNKGGSYTSNFQKFHQLAYSISSSSGYAYAFAGENSKRLKFNDDTFIEYPSFTQEIHAPGQSSQKEGGQQQSNSKDNGNLLGTFTIEAAKSKTKTEVKKTEDTQNQGKKAEGTPNQGKKAEGTENQGKTIFLYKTSIPNDKQDGVDAVLIKDK.

An N-terminal signal peptide occupies residues 1-22; sequence MQFKYGALIFSGFLGLSIVLAS. Residue Cys23 is the site of N-palmitoyl cysteine attachment. Cys23 carries S-diacylglycerol cysteine lipidation. Disordered stretches follow at residues 446–468 and 480–514; these read APGQ…NGNL and KTKT…TENQ. The segment covering 448–460 has biased composition (low complexity); that stretch reads GQSSQKEGGQQQS. Residues 480–490 are compositionally biased toward basic and acidic residues; that stretch reads KTKTEVKKTED.

It belongs to the MG185/MG260 family.

The protein localises to the cell membrane. This is an uncharacterized protein from Mycoplasma pneumoniae (strain ATCC 29342 / M129 / Subtype 1) (Mycoplasmoides pneumoniae).